The chain runs to 193 residues: AP-3 complex subunit sigma-1 (193 aa).

The residue at position 191 (Ser191) is a Phosphoserine.

It belongs to the adaptor complexes small subunit family. Adaptor protein complex 3 (AP-3) is a heterotetramer composed of two large adaptins (delta-type subunit AP3D1 and beta-type subunit AP3B1 or AP3B2), a medium adaptin (mu-type subunit AP3M1 or AP3M2) and a small adaptin (sigma-type subunit APS1 or AP3S2). Interacts with AGAP1. AP-3 associates with the BLOC-1 complex.

It localises to the golgi apparatus. It is found in the cytoplasmic vesicle membrane. In terms of biological role, part of the AP-3 complex, an adaptor-related complex which is not clathrin-associated. The complex is associated with the Golgi region as well as more peripheral structures. It facilitates the budding of vesicles from the Golgi membrane and may be directly involved in trafficking to lysosomes. In concert with the BLOC-1 complex, AP-3 is required to target cargos into vesicles assembled at cell bodies for delivery into neurites and nerve terminals. The polypeptide is AP-3 complex subunit sigma-1 (AP3S1) (Bos taurus (Bovine)).